A 524-amino-acid polypeptide reads, in one-letter code: Excitatory amino acid transporter 3 (524 aa).

Topologically, residues 1-18 (MGKPARKGCEWKRFLKNN) are cytoplasmic. A helical membrane pass occupies residues 19-38 (WVLLSTVAAVVLGITTGVLV). The Extracellular segment spans residues 39 to 61 (REHSNLSTLEKFYFAFPGEILMR). Asn43 carries N-linked (GlcNAc...) asparagine glycosylation. Residues 62 to 82 (MLKLIILPLIISSMITGVAAL) traverse the membrane as a helical segment. Residues 83–93 (DSNVSGKIGLR) lie on the Cytoplasmic side of the membrane. The chain crosses the membrane as a helical span at residues 94 to 114 (AVVYYFCTTLIAVILGIVLVV). Residues Tyr98, Thr101, and Thr102 each coordinate Na(+). Residues 115–205 (SIKPGVTQKV…KTKEYKIVGM (91 aa)) are Extracellular-facing. N-linked (GlcNAc...) asparagine glycosylation is found at Asn178 and Asn195. Residues 206–229 (YSDGINVLGLIVFCLVFGLVIGKM) form a helical membrane-spanning segment. Topologically, residues 230–238 (GEKGQILVD) are cytoplasmic. A helical membrane pass occupies residues 239–266 (FFNALSDATMKIVQIIMCYMPLGILFLI). At 267–286 (AGKIIEVEDWEIFRKLGLYM) the chain is on the extracellular side. Residues 287-308 (ATVLTGLAIHSIVILPLIYFIV) form a helical membrane-spanning segment. Topologically, residues 309–313 (VRKNP) are cytoplasmic. The discontinuously helical intramembrane region spans 314–344 (FRFAMGMAQALLTALMISSSSATLPVTFRCA). Ser331 and Ser333 together coordinate L-aspartate. At 345–353 (EENNQVDKR) the chain is on the cytoplasmic side. The helical transmembrane segment at 354–380 (ITRFVLPVGATINMDGTALYEAVAAVF) threads the bilayer. Residues Gly362, Thr364, Asn366, and Asp368 each contribute to the Na(+) site. Thr370 is an L-aspartate binding site. Over 381–393 (IAQLNDLDLGIGQ) the chain is Extracellular. The discontinuously helical intramembrane region spans 394 to 427 (IITISITATSASIGAAGVPQAGLVTMVIVLSAVG). Positions 405, 406, and 408 each coordinate Na(+). An L-aspartate-binding site is contributed by Val411. Residues 428–440 (LPAEDVTLIIAVD) are Extracellular-facing. The helical transmembrane segment at 441–462 (WLLDRFRTMVNVLGDAFGTGIV) threads the bilayer. Positions 447, 448, and 451 each coordinate L-aspartate. Na(+)-binding residues include Asn451 and Asp455. The Cytoplasmic segment spans residues 463–524 (EKLSKKELEQ…TISFTQTSQF (62 aa)). 2 positions are modified to phosphoserine: Ser517 and Ser522.

The protein belongs to the dicarboxylate/amino acid:cation symporter (DAACS) (TC 2.A.23) family. SLC1A1 subfamily. In terms of assembly, homotrimer. Interacts with ARL6IP5. Interacts with RTN2 (via N-terminus); the interaction promotes cell surface expression of SLC1A1. Interacts with SORCS2; this interaction is important for normal expression at the cell membrane. Glycosylated. As to expression, expressed in all tissues tested including liver, muscle, testis, ovary, retinoblastoma cell line, neurons and brain (in which there was dense expression in substantia nigra, red nucleus, hippocampus and in cerebral cortical layers).

The protein resides in the cell membrane. It localises to the apical cell membrane. Its subcellular location is the synapse. It is found in the synaptosome. The protein localises to the early endosome membrane. The protein resides in the late endosome membrane. It localises to the recycling endosome membrane. The catalysed reaction is K(+)(in) + L-glutamate(out) + 3 Na(+)(out) + H(+)(out) = K(+)(out) + L-glutamate(in) + 3 Na(+)(in) + H(+)(in). It catalyses the reaction K(+)(in) + L-aspartate(out) + 3 Na(+)(out) + H(+)(out) = K(+)(out) + L-aspartate(in) + 3 Na(+)(in) + H(+)(in). It carries out the reaction D-aspartate(out) + K(+)(in) + 3 Na(+)(out) + H(+)(out) = D-aspartate(in) + K(+)(out) + 3 Na(+)(in) + H(+)(in). The enzyme catalyses K(+)(in) + L-cysteine(out) + 3 Na(+)(out) + H(+)(out) = K(+)(out) + L-cysteine(in) + 3 Na(+)(in) + H(+)(in). Functionally, sodium-dependent, high-affinity amino acid transporter that mediates the uptake of L-glutamate and also L-aspartate and D-aspartate. Can also transport L-cysteine. Functions as a symporter that transports one amino acid molecule together with two or three Na(+) ions and one proton, in parallel with the counter-transport of one K(+) ion. Mediates Cl(-) flux that is not coupled to amino acid transport; this avoids the accumulation of negative charges due to aspartate and Na(+) symport. Plays an important role in L-glutamate and L-aspartate reabsorption in renal tubuli. Plays a redundant role in the rapid removal of released glutamate from the synaptic cleft, which is essential for terminating the postsynaptic action of glutamate. Contributes to glutathione biosynthesis and protection against oxidative stress via its role in L-glutamate and L-cysteine transport. Negatively regulated by ARL6IP5. The sequence is that of Excitatory amino acid transporter 3 from Homo sapiens (Human).